A 447-amino-acid polypeptide reads, in one-letter code: tRNA-2-methylthio-N(6)-dimethylallyladenosine synthase (447 aa).

Positions 3 to 120 constitute an MTTase N-terminal domain; it reads KKLYIETHGC…LPEMIDAART (118 aa). Residues Cys-12, Cys-49, Cys-83, Cys-157, Cys-161, and Cys-164 each coordinate [4Fe-4S] cluster. The Radical SAM core domain maps to 143–375; that stretch reads RVDGPSAFVS…QHRINQYGFE (233 aa). One can recognise a TRAM domain in the interval 378–442; the sequence is RRMVGTVQRI…PHSLRGTLLD (65 aa).

Belongs to the methylthiotransferase family. MiaB subfamily. As to quaternary structure, monomer. Requires [4Fe-4S] cluster as cofactor.

It is found in the cytoplasm. The enzyme catalyses N(6)-dimethylallyladenosine(37) in tRNA + (sulfur carrier)-SH + AH2 + 2 S-adenosyl-L-methionine = 2-methylsulfanyl-N(6)-dimethylallyladenosine(37) in tRNA + (sulfur carrier)-H + 5'-deoxyadenosine + L-methionine + A + S-adenosyl-L-homocysteine + 2 H(+). Catalyzes the methylthiolation of N6-(dimethylallyl)adenosine (i(6)A), leading to the formation of 2-methylthio-N6-(dimethylallyl)adenosine (ms(2)i(6)A) at position 37 in tRNAs that read codons beginning with uridine. The sequence is that of tRNA-2-methylthio-N(6)-dimethylallyladenosine synthase from Ectopseudomonas mendocina (strain ymp) (Pseudomonas mendocina).